We begin with the raw amino-acid sequence, 81 residues long: UPF0180 protein ABC2430 (81 aa).

Belongs to the UPF0180 family.

The polypeptide is UPF0180 protein ABC2430 (Shouchella clausii (strain KSM-K16) (Alkalihalobacillus clausii)).